The following is a 51-amino-acid chain: Insulin (51 aa).

Cystine bridges form between cysteine 7–cysteine 37, cysteine 19–cysteine 50, and cysteine 36–cysteine 41.

It belongs to the insulin family. As to quaternary structure, heterodimer of a B chain and an A chain linked by two disulfide bonds.

The protein localises to the secreted. Functionally, insulin decreases blood glucose concentration. It increases cell permeability to monosaccharides, amino acids and fatty acids. It accelerates glycolysis, the pentose phosphate cycle, and glycogen synthesis in liver. This is Insulin (INS) from Balaenoptera physalus (Fin whale).